A 76-amino-acid chain; its full sequence is Demidefensin-3 (76 aa).

Residues 1 to 22 (MRTLALHTAMLLLVALHAQAEA) form the signal peptide. The propeptide occupies 23 to 64 (RQARADEAAAQQQPGADDQGMAHSFTWPENAALPLSESERGL). Residues 25–45 (ARADEAAAQQQPGADDQGMAH) form a disordered region. The span at 30–44 (AAAQQQPGADDQGMA) shows a compositional bias: low complexity. Cys-68 and Cys-73 form a disulfide bridge. Residues 74 to 76 (RLL) constitute a propeptide that is removed on maturation.

It belongs to the alpha-defensin family. Theta subfamily. As to quaternary structure, forms a cyclic homodimer; disulfide-linked. In terms of processing, this is a cyclic peptide.

Its function is as follows. Has antimicrobial activities against bacteria and fungi. The chain is Demidefensin-3 from Macaca mulatta (Rhesus macaque).